Here is a 142-residue protein sequence, read N- to C-terminus: Large ribosomal subunit protein uL13 (142 aa).

Belongs to the universal ribosomal protein uL13 family. Part of the 50S ribosomal subunit.

In terms of biological role, this protein is one of the early assembly proteins of the 50S ribosomal subunit, although it is not seen to bind rRNA by itself. It is important during the early stages of 50S assembly. The sequence is that of Large ribosomal subunit protein uL13 from Methylococcus capsulatus (strain ATCC 33009 / NCIMB 11132 / Bath).